A 268-amino-acid chain; its full sequence is Acidic leucine-rich nuclear phosphoprotein 32 family member E (268 aa).

At methionine 1 the chain carries N-acetylmethionine. 4 LRR repeats span residues 18–38 (EVTE…EGLN), 43–64 (ELEF…PSLN), 65–87 (KLRK…AEKC), and 89–110 (NLTY…EALQ). Lysine 68 participates in a covalent cross-link: Glycyl lysine isopeptide (Lys-Gly) (interchain with G-Cter in SUMO2). Residues 123–161 (CEITNLEDYRESIFELLQQITYLDGFDQEDNEAPDSEEE) form the LRRCT domain. 2 stretches are compositionally biased toward acidic residues: residues 149 to 216 (DQED…EEEV) and 226 to 247 (IQDE…EEEE). The disordered stretch occupies residues 149–268 (DQEDNEAPDS…AEDDGEEEDD (120 aa)). The tract at residues 215–268 (EVGLSYLMKEEIQDEEDDDDYVEEGEEEEEEEEGGLRGEKRKRDAEDDGEEEDD) is ZID domain. Residues 248–259 (GGLRGEKRKRDA) show a composition bias toward basic and acidic residues.

This sequence belongs to the ANP32 family. In terms of assembly, interacts with the importin alpha KPNA1 and KPNA2. Component of a SWR1-like complex, composed of EP400, KAT5/TIP60, TRRAP, BRD8, RUVBL1, RUVBL2, ING3 and ANP32E; the complex does not contain SRCAP. Interacts with H2A.Z/H2AZ1. Phosphorylated. The phosphorylation is nuclear localization signal (NLS)-dependent. In terms of tissue distribution, expressed in peripheral blood leukocytes, colon, small intestine, prostate, thymus, spleen, skeletal muscle, liver and kidney.

It localises to the cytoplasm. The protein localises to the nucleus. Histone chaperone that specifically mediates the genome-wide removal of histone H2A.Z/H2AZ1 from the nucleosome: removes H2A.Z/H2AZ1 from its normal sites of deposition, especially from enhancer and insulator regions. Not involved in deposition of H2A.Z/H2AZ1 in the nucleosome. May stabilize the evicted H2A.Z/H2AZ1-H2B dimer, thus shifting the equilibrium towards dissociation and the off-chromatin state. Inhibits activity of protein phosphatase 2A (PP2A). Does not inhibit protein phosphatase 1. May play a role in cerebellar development and synaptogenesis. The chain is Acidic leucine-rich nuclear phosphoprotein 32 family member E (ANP32E) from Homo sapiens (Human).